A 95-amino-acid polypeptide reads, in one-letter code: Putative pterin-4-alpha-carbinolamine dehydratase (95 aa).

Belongs to the pterin-4-alpha-carbinolamine dehydratase family.

The enzyme catalyses (4aS,6R)-4a-hydroxy-L-erythro-5,6,7,8-tetrahydrobiopterin = (6R)-L-erythro-6,7-dihydrobiopterin + H2O. The sequence is that of Putative pterin-4-alpha-carbinolamine dehydratase from Solibacter usitatus (strain Ellin6076).